The primary structure comprises 264 residues: Small ribosomal subunit protein uS2 (264 aa).

The interval 228–264 (QLDAEDDYEDYDGSEYDDDYEETEYTDAVIPDEETEE) is disordered. Residues 230 to 264 (DAEDDYEDYDGSEYDDDYEETEYTDAVIPDEETEE) are compositionally biased toward acidic residues.

This sequence belongs to the universal ribosomal protein uS2 family.

The polypeptide is Small ribosomal subunit protein uS2 (Nostoc punctiforme (strain ATCC 29133 / PCC 73102)).